A 255-amino-acid chain; its full sequence is 3-deoxy-manno-octulosonate cytidylyltransferase (255 aa).

Belongs to the KdsB family.

It is found in the cytoplasm. The catalysed reaction is 3-deoxy-alpha-D-manno-oct-2-ulosonate + CTP = CMP-3-deoxy-beta-D-manno-octulosonate + diphosphate. It participates in nucleotide-sugar biosynthesis; CMP-3-deoxy-D-manno-octulosonate biosynthesis; CMP-3-deoxy-D-manno-octulosonate from 3-deoxy-D-manno-octulosonate and CTP: step 1/1. Its pathway is bacterial outer membrane biogenesis; lipopolysaccharide biosynthesis. Its function is as follows. Activates KDO (a required 8-carbon sugar) for incorporation into bacterial lipopolysaccharide in Gram-negative bacteria. The chain is 3-deoxy-manno-octulosonate cytidylyltransferase from Saccharophagus degradans (strain 2-40 / ATCC 43961 / DSM 17024).